We begin with the raw amino-acid sequence, 76 residues long: Small proline-rich protein 2E (76 aa).

3 consecutive repeat copies span residues 21-29 (KKCPEPCPH), 30-38 (PQCPEPCPP), and 39-47 (PKCPEPCPE). A 3 X 9 AA approximate tandem repeats region spans residues 21 to 47 (KKCPEPCPHPQCPEPCPPPKCPEPCPE). Residues 52 to 76 (PSYQQKCPPVQPPPPCQQKCPPKSK) are disordered.

This sequence belongs to the cornifin (SPRR) family. In terms of tissue distribution, expressed in uterus.

Its subcellular location is the cytoplasm. Its function is as follows. Cross-linked envelope protein of keratinocytes. It is a keratinocyte protein that first appears in the cell cytosol, but ultimately becomes cross-linked to membrane proteins by transglutaminase. All that results in the formation of an insoluble envelope beneath the plasma membrane. The protein is Small proline-rich protein 2E (Sprr2e) of Mus musculus (Mouse).